We begin with the raw amino-acid sequence, 365 residues long: MAGNIFGQMFRIATWGESHGRAVGVVVDGLPAGLPFSEADIQKELDRRRPGQSEVSTPRSEADRVEILSGIFEGMSTGTPISMLVWNSDARSSSYDVIKNTPRPGHADFSYMARYGIRDHRGGGRSSARETIGRVAGGALAKLLLSRYGVRIAGHVLELGGIRAKPLSFEEILENVEKTPVRCADLEAAEKMLEKVATLRQEGDSVGGIVELIVKGVPAGLGEPVFDRLDADLSKALMSIPAVKGFEIGAGFEAARMRGSEMNDPFRMEQGEITCSKNNAGGILGGISTGLDIICRAAVKPTPSIGKVQQTVDLTTRENTEISIRGRHDPTIPPRMVPVAEAMVALVLSDHMLRSGFINPRTLLE.

Over residues 41-51 (IQKELDRRRPG) the composition is skewed to basic and acidic residues. Residues 41-62 (IQKELDRRRPGQSEVSTPRSEA) form a disordered region. NADP(+) is bound at residue R48. Residues 125 to 127 (RSS), G285, 300 to 304 (KPTPS), and R327 contribute to the FMN site.

This sequence belongs to the chorismate synthase family. FMNH2 is required as a cofactor.

It carries out the reaction 5-O-(1-carboxyvinyl)-3-phosphoshikimate = chorismate + phosphate. The protein operates within metabolic intermediate biosynthesis; chorismate biosynthesis; chorismate from D-erythrose 4-phosphate and phosphoenolpyruvate: step 7/7. Its function is as follows. Catalyzes the anti-1,4-elimination of the C-3 phosphate and the C-6 proR hydrogen from 5-enolpyruvylshikimate-3-phosphate (EPSP) to yield chorismate, which is the branch point compound that serves as the starting substrate for the three terminal pathways of aromatic amino acid biosynthesis. This reaction introduces a second double bond into the aromatic ring system. The polypeptide is Chorismate synthase (Methanosarcina acetivorans (strain ATCC 35395 / DSM 2834 / JCM 12185 / C2A)).